A 211-amino-acid chain; its full sequence is Imidazole glycerol phosphate synthase subunit HisH (211 aa).

Residues V3 to A211 enclose the Glutamine amidotransferase type-1 domain. Catalysis depends on C81, which acts as the Nucleophile. Catalysis depends on residues H186 and E188.

Heterodimer of HisH and HisF.

Its subcellular location is the cytoplasm. It catalyses the reaction 5-[(5-phospho-1-deoxy-D-ribulos-1-ylimino)methylamino]-1-(5-phospho-beta-D-ribosyl)imidazole-4-carboxamide + L-glutamine = D-erythro-1-(imidazol-4-yl)glycerol 3-phosphate + 5-amino-1-(5-phospho-beta-D-ribosyl)imidazole-4-carboxamide + L-glutamate + H(+). It carries out the reaction L-glutamine + H2O = L-glutamate + NH4(+). The protein operates within amino-acid biosynthesis; L-histidine biosynthesis; L-histidine from 5-phospho-alpha-D-ribose 1-diphosphate: step 5/9. IGPS catalyzes the conversion of PRFAR and glutamine to IGP, AICAR and glutamate. The HisH subunit catalyzes the hydrolysis of glutamine to glutamate and ammonia as part of the synthesis of IGP and AICAR. The resulting ammonia molecule is channeled to the active site of HisF. This Gloeothece citriformis (strain PCC 7424) (Cyanothece sp. (strain PCC 7424)) protein is Imidazole glycerol phosphate synthase subunit HisH.